The following is a 260-amino-acid chain: Salicylic acid-binding protein 2 (260 aa).

Salicylate is bound by residues Ala-13, Ser-81, and Lys-159. Ser-81 acts as the Acyl-ester intermediate in catalysis. Catalysis depends on charge relay system residues Asp-210 and His-238. The salicylate site is built by His-238, Leu-253, and His-257.

It belongs to the AB hydrolase superfamily. Methylesterase family.

The catalysed reaction is methyl salicylate + H2O = salicylate + methanol + H(+). The protein operates within plant hormone biosynthesis. Esterase activity is down-regulated by salicylic acid (SA) or by tetraFA, a synthetic SA analog. Required to convert methyl salicylate (MeSA) to salicylic acid (SA) as part of the signal transduction pathways that activate systemic acquired resistance in systemic tissue. MeSA is believed to be an inactive form that needs to be demethylated to exert a biological effect. Also able to catalyze the conversion of acibenzolar-S-methyl into acibenzolar to induce systemic acquired resistance. This is Salicylic acid-binding protein 2 from Nicotiana tabacum (Common tobacco).